A 552-amino-acid chain; its full sequence is Ribosomal lysine N-methyltransferase 3 (552 aa).

The region spanning 26–335 (SKCDIRESPL…QGQEIFNSYG (310 aa)) is the SET domain. Tyr334 is a binding site for S-adenosyl-L-methionine. A disordered region spans residues 399 to 432 (EDEEDEDGQAKSDNLSDDIESEEEEEEEEGDDSL). The span at 413-432 (LSDDIESEEEEEEEEGDDSL) shows a compositional bias: acidic residues.

The protein belongs to the class V-like SAM-binding methyltransferase superfamily.

It localises to the nucleus. In terms of biological role, S-adenosyl-L-methionine-dependent protein-lysine N-methyltransferase that monomethylates 60S ribosomal protein L42 (RPL42A and RPL42B) at 'Lys-40'. The protein is Ribosomal lysine N-methyltransferase 3 of Saccharomyces cerevisiae (strain ATCC 204508 / S288c) (Baker's yeast).